Consider the following 1170-residue polypeptide: Short transient receptor potential channel 2 (1170 aa).

Over 1 to 627 the chain is Cytoplasmic; the sequence is MLMSLTDSKE…GWRGSTTIWK (627 aa). Disordered stretches follow at residues 64-113, 142-231, and 322-342; these read SLSD…QTST, AHKA…QATG, and ESGSDPSGAGPGGPLRNVEES. The span at 74–85 shows a compositional bias: polar residues; that stretch reads SPGSSGLNQNSS. The segment covering 158-177 has biased composition (basic and acidic residues); it reads GEPDSSHPERAEPRAEEPNR. ANK repeat units lie at residues 300-329, 346-376, 377-405, and 429-458; these read KFPPTLLRAIQEGQLGLVQQLLESGSDPSG, SWREALNLAIRLGHEVITDVLLANVKFDFRQ, IHEALLVAVDTNQPAVVRRLLARLEREKG, and PGVTPLTLACQKDLYEIAQLLMDQGHTIAR. Residues 628–648 traverse the membrane as a helical segment; the sequence is LFVAFLIFLTMPFLCIGYWLA. At 649–658 the chain is on the extracellular side; that stretch reads PKSRLGRLLK. Residues 659–679 form a helical membrane-spanning segment; it reads IPVLKFLLHSASYLWFLIFLL. At 680–701 the chain is on the cytoplasmic side; sequence GESLVMETQLSTFKGRSQSVWE. A helical transmembrane segment spans residues 702 to 722; that stretch reads TSLHMIWVTGFLWFECKEVWI. Residues 723–737 are Extracellular-facing; that stretch reads EGLRSYLLDWWNFLD. Residues 738-758 traverse the membrane as a helical segment; the sequence is VVILSLYLASFALRLLLAGLA. At 759–788 the chain is on the cytoplasmic side; the sequence is YMHCRDASDSSTCRYFTTAERSEWRTEDPQ. The chain crosses the membrane as a helical span at residues 789-809; the sequence is FLAEVLFAVTSMLSFTRLAYI. Over 810–832 the chain is Extracellular; it reads LPAHESLGTLQISIGKMIDDMIR. A helical membrane pass occupies residues 833-853; it reads FMFILMIILTAFLCGLNNIYV. Residues 854–898 lie on the Cytoplasmic side of the membrane; the sequence is PYQETEKLGNFNETFQFLFWTMFGMEEHSVVDMPQFLVPEFVGRA. The helical transmembrane segment at 899–919 threads the bilayer; it reads MYGIFTIVMVIVLLNMLIAMI. The Extracellular segment spans residues 920 to 1170; that stretch reads TNSFQKIEDD…GEDLETKGES (251 aa). Residues 1030 to 1068 adopt a coiled-coil conformation; the sequence is RREFEETRRKDLGNRLTELTKTVSRLQSEVASVQKTVAA. The interval 1118-1170 is disordered; sequence LEDSLDATGEAGTPASGESSSSSSAHVLVHREQEAEGAGDLPLGEDLETKGES.

It belongs to the transient receptor (TC 1.A.4) family. STrpC subfamily. TRPC2 sub-subfamily. As to expression, expressed exclusively in vomeronasal organ neurons (sensory microvilli).

The protein localises to the membrane. Functionally, thought to form a receptor-activated calcium permeant cation channel. Probably is operated by a phosphatidylinositol second messenger system activated by receptor tyrosine kinases or G-protein coupled receptors. Is not activated by intracellular calcium store depletion. In Rattus norvegicus (Rat), this protein is Short transient receptor potential channel 2 (Trpc2).